The sequence spans 2016 residues: Sodium channel protein type 5 subunit alpha (2016 aa).

The Cytoplasmic portion of the chain corresponds to 1–129 (MANFLLPRGT…IRRAAVKILV (129 aa)). Residues 28-56 (MAEKQARGSTTLQESREGLPEEEAPRPQL) are disordered. Ser-36 carries the post-translational modification Phosphoserine. Thr-38 carries the phosphothreonine modification. Residues 41-52 (ESREGLPEEEAP) show a composition bias toward basic and acidic residues. Residues 113–420 (VLSPFHPIRR…VVAMAYEEQN (308 aa)) form an I repeat. The chain crosses the membrane as a helical span at residues 130 to 149 (HSLFNMLIMCTILTNCVFMA). Residues 150-157 (QHDPPPWT) are Extracellular-facing. Residues 158 to 179 (KYVEYTFTAIYTFESLVKILAR) traverse the membrane as a helical segment. At 180–188 (GFCLHAFTF) the chain is on the cytoplasmic side. A helical membrane pass occupies residues 189–209 (LRDPWNWLDFSVIIMAYTTEF). The Extracellular portion of the chain corresponds to 210–216 (VDLGNVS). N-linked (GlcNAc...) asparagine glycosylation occurs at Asn-214. Residues 217–236 (ALRTFRVLRALKTISVISGL) form a helical membrane-spanning segment. The Cytoplasmic portion of the chain corresponds to 237–249 (KTIVGALIQSVKK). A helical transmembrane segment spans residues 250–272 (LADVMVLTVFCLSVFALIGLQLF). Residues 273-357 (MGNLRHKCVR…PDHGYTSFDS (85 aa)) lie on the Extracellular side of the membrane. Cys-280 and Cys-335 are oxidised to a cystine. 5 N-linked (GlcNAc...) asparagine glycosylation sites follow: Asn-283, Asn-288, Asn-291, Asn-318, and Asn-328. Positions 358–378 (FAWAFLALFRLMTQDCWERLY) form an intramembrane region, pore-forming. At 379–386 (QQTLRSAG) the chain is on the extracellular side. A helical transmembrane segment spans residues 387–413 (KIYMIFFMLVIFLGSFYLVNLILAVVA). The Cytoplasmic portion of the chain corresponds to 414–719 (MAYEEQNQAT…VKLVVMDPFT (306 aa)). Phosphoserine is present on residues Ser-457, Ser-460, Ser-483, and Ser-484. Residues 461–591 (LEMSPLAPVN…APGHALHGKK (131 aa)) are disordered. Residue Thr-486 is modified to Phosphothreonine. The segment covering 491-503 (EDRLPKSDSEDGP) has biased composition (basic and acidic residues). 2 positions are modified to phosphoserine: Ser-497 and Ser-510. A compositionally biased stretch (polar residues) spans 509–528 (LSLTRGLSRTSMKPRSSRGS). Dimethylated arginine; alternate occurs at positions 513 and 526. An omega-N-methylarginine; alternate mark is found at Arg-513 and Arg-526. Residues Ser-539, Ser-571, Ser-664, and Ser-667 each carry the phosphoserine modification. The span at 570 to 580 (TSAQGQPSPGT) shows a compositional bias: polar residues. Arg-680 carries the dimethylated arginine; alternate modification. Omega-N-methylarginine; alternate is present on Arg-680. The II repeat unit spans residues 699-969 (CCPLWMSIKQ…QLALARIQRG (271 aa)). The chain crosses the membrane as a helical span at residues 720–737 (DLTITMCIVLNTLFMALE). Topologically, residues 738 to 746 (HYNMTSEFE) are extracellular. Residue Asn-740 is glycosylated (N-linked (GlcNAc...) asparagine). The chain crosses the membrane as a helical span at residues 747–769 (EMLQVGNLVFTGIFTAEMTFKII). Topologically, residues 770–775 (ALDPYY) are cytoplasmic. The helical transmembrane segment at 776–796 (YFQQGWNIFDSIIVILSLMEL) threads the bilayer. Residues 797-806 (GLSRMSNLSV) are Extracellular-facing. A glycan (N-linked (GlcNAc...) asparagine) is linked at Asn-803. A helical transmembrane segment spans residues 807–821 (LRSFRLLRVFKLAKS). Topologically, residues 822-838 (WPTLNTLIKIIGNSVGA) are cytoplasmic. The helical transmembrane segment at 839–860 (LGNLTLVLAIIVFIFAVVGMQL) threads the bilayer. Residues 861–884 (FGKNYSELRDSDSGLLPRWHMMDF) lie on the Extracellular side of the membrane. Asn-864 carries an N-linked (GlcNAc...) asparagine glycan. The pore-forming intramembrane region spans 885-903 (FHAFLIIFRILCGEWIETM). At 904–912 (WDCMEVSGQ) the chain is on the extracellular side. Cysteines 906 and 915 form a disulfide. A helical membrane pass occupies residues 913-941 (SLCLLVFLLVMVIGNLVVLNLFLALLLSS). The Cytoplasmic portion of the chain corresponds to 942–1203 (FSADNLTAPD…LRKTCYHIVE (262 aa)). A disordered region spans residues 1005 to 1141 (IATPYSPPPP…PEDSCSEGST (137 aa)). Residues 1015-1030 (ETEKVPPTRKETRFEE) show a composition bias toward basic and acidic residues. Residues 1033 to 1044 (QPGQGTPGDPEP) show a composition bias toward low complexity. Residues 1054 to 1071 (SDTDDQEEDEENSLGTEE) show a composition bias toward acidic residues. Low complexity predominate over residues 1096–1113 (SQVSATASSEAEASASQA). The III repeat unit spans residues 1187-1501 (PGKVWWRLRK…KKYYNAMKKL (315 aa)). Residues 1204–1225 (HSWFETFIIFMILLSSGALAFE) form a helical membrane-spanning segment. Over 1226-1236 (DIYLEERKTIK) the chain is Extracellular. The helical transmembrane segment at 1237-1259 (VLLEYADKMFTYVFVLEMLLKWV) threads the bilayer. The Cytoplasmic portion of the chain corresponds to 1260–1268 (AYGFKKYFT). Residues 1269-1291 (NAWCWLDFLIVDVSLVSLVANTL) traverse the membrane as a helical segment. The Extracellular portion of the chain corresponds to 1292–1297 (GFAEMG). The chain crosses the membrane as a helical span at residues 1298 to 1317 (PIKSLRTLRALRPLRALSRF). Over 1318 to 1330 (EGMRVVVNALVGA) the chain is Cytoplasmic. Residues 1331-1355 (IPSIMNVLLVCLIFWLIFSIMGVNL) traverse the membrane as a helical segment. Residues 1356 to 1400 (FAGKFGRCINQTEGDLPLNYTIVNNKSQCESLNLTGELYWTKVKV) are Extracellular-facing. N-linked (GlcNAc...) asparagine glycosylation is found at Asn-1365, Asn-1374, Asn-1380, and Asn-1388. Residues 1401–1422 (NFDNVGAGYLALLQVATFKGWM) constitute an intramembrane region (pore-forming). Over 1423–1445 (DIMYAAVDSRGYEEQPQWEYNLY) the chain is Extracellular. A helical membrane pass occupies residues 1446 to 1470 (MYIYFVIFIIFGSFFTLNLFIGVII). The Cytoplasmic portion of the chain corresponds to 1471-1528 (DNFNQQKKKLGGQDIFMTEEQKKYYNAMKKLGSKKPQKPIPRPLNKYQGFIFDIVTKQ). Ser-1503 carries the phosphoserine; by PKC modification. An IV repeat occupies 1510–1807 (IPRPLNKYQG…WEKFDPEATQ (298 aa)). Residues 1529–1547 (AFDVTIMFLICLNMVTMMV) form a helical membrane-spanning segment. Over 1548 to 1558 (ETDDQSPEKIN) the chain is Extracellular. A helical membrane pass occupies residues 1559 to 1580 (ILAKINLLFVAIFTGECIVKLA). Topologically, residues 1581–1589 (ALRHYYFTN) are cytoplasmic. Residues 1590–1612 (SWNIFDFVVVILSIVGTVLSDII) traverse the membrane as a helical segment. Residues 1613–1619 (QKYFFSP) are Extracellular-facing. The chain crosses the membrane as a helical span at residues 1620–1640 (TLFRVIRLARIGRILRLIRGA). Residues 1641-1650 (KGIRTLLFAL) are Cytoplasmic-facing. The helical transmembrane segment at 1651–1679 (MMSLPALFNIGLLLFLVMFIYSIFGMANF) threads the bilayer. At 1680-1697 (AYVKWEAGIDDMFNFQTF) the chain is on the extracellular side. The segment at residues 1698–1714 (ANSMLCLFQITTSAGWD) is an intramembrane region (pore-forming). Over 1715–1745 (GLLSPILNTGPPYCDPTLPNSNGSRGDCGSP) the chain is Extracellular. Residue Asn-1736 is glycosylated (N-linked (GlcNAc...) asparagine). The helical transmembrane segment at 1746–1771 (AVGILFFTTYIIISFLIVVNMYIAII) threads the bilayer. At 1772–2016 (LENFSVATEE…SPDRDRESIV (245 aa)) the chain is on the cytoplasmic side. Positions 1839–1901 (DLPMVSGDRI…ITTTLRRKHE (63 aa)) are interaction with FGF13. In terms of domain architecture, IQ spans 1901–1930 (EEVSAMVIQRAFRRHLLQRSLKHASFLFRQ). Positions 1959–1979 (PLGPPSSSSISSTSFPPSYDS) are enriched in low complexity. The segment at 1959 to 2016 (PLGPPSSSSISSTSFPPSYDSVTRATSDNLQVRGSDYSHSEDLADFPPSPDRDRESIV) is disordered. Positions 1974–1977 (PPSY) are interaction with NEDD4, NEDD4L and WWP2. Residues 1981–1990 (TRATSDNLQV) are compositionally biased toward polar residues.

The protein belongs to the sodium channel (TC 1.A.1.10) family. Nav1.5/SCN5A subfamily. In terms of assembly, cannot form the same regulatory interactions with beta subunits as other Navs do. Interacts with the PDZ domain of the syntrophin SNTA1, SNTB1 and SNTB2. Interacts with NEDD4, NEDD4L, WWP2 and GPD1L. Interacts with CALM. Interacts with FGF13; the interaction is direct and FGF13 may regulate SNC5A density at membranes and function. May also interact with FGF12 and FGF14. Interacts with TMEM233. Interacts with the spider Jingzhaotoxin-I (AC P83974, AC B1P1B7, AC B1P1B8). Interacts with ANK3. Interacts with PKP2 (via N-terminus). Interacts with XIRP2; the interaction is required for normal action potential configuration in the heart. Post-translationally, ubiquitinated by NEDD4L; which promotes its endocytosis. Does not seem to be ubiquitinated by NEDD4 or WWP2. Phosphorylation at Ser-1503 by PKC in a highly conserved cytoplasmic loop slows inactivation of the sodium channel and reduces peak sodium currents. Regulated through phosphorylation by CaMK2D. In terms of processing, lacks the cysteine which covalently binds the conotoxin GVIIJ. This cysteine (position 868) is speculated in other sodium channel subunits alpha to be implied in covalent binding with the sodium channel subunit beta-2 or beta-4. Post-translationally, N-glycosylated at Asn-318, probably hinders potential interaction with regulatory subunits. Found in jejunal circular smooth muscle cells (at protein level). Expressed in human atrial and ventricular cardiac muscle but not in adult skeletal muscle, brain, myometrium, liver, or spleen. Isoform 4 is expressed in brain.

It localises to the cell membrane. The protein localises to the cytoplasm. The protein resides in the perinuclear region. It is found in the sarcolemma. Its subcellular location is the T-tubule. It localises to the cell junction. It carries out the reaction Na(+)(in) = Na(+)(out). With respect to regulation, channel inactivation is regulated by intracellular calcium levels. It is a tetrodotoxin-resistant voltage-gated Na(+) channel (Nav). Its function is as follows. Pore-forming subunit of Nav1.5, a voltage-gated sodium (Nav) channel that directly mediates the depolarizing phase of action potentials in excitable membranes. Navs, also called VGSCs (voltage-gated sodium channels) or VDSCs (voltage-dependent sodium channels), operate by switching between closed and open conformations depending on the voltage difference across the membrane. In the open conformation they allow Na(+) ions to selectively pass through the pore, along their electrochemical gradient. The influx of Na(+) ions provokes membrane depolarization, initiating the propagation of electrical signals throughout cells and tissues. Nav1.5 is the predominant sodium channel expressed in myocardial cells and it is responsible for the initial upstroke of the action potential in cardiac myocytes, thereby initiating the heartbeat. Required for normal electrical conduction including formation of the infranodal ventricular conduction system and normal action potential configuration, as a result of its interaction with XIRP2. The sequence is that of Sodium channel protein type 5 subunit alpha from Homo sapiens (Human).